Here is a 265-residue protein sequence, read N- to C-terminus: 4-hydroxy-tetrahydrodipicolinate reductase (265 aa).

9 to 14 (GPRGRM) contacts NAD(+). An NADP(+)-binding site is contributed by Arg-37. NAD(+) is bound by residues 98–100 (GTT) and 124–127 (APNF). The Proton donor/acceptor role is filled by His-154. His-155 contributes to the (S)-2,3,4,5-tetrahydrodipicolinate binding site. Lys-158 functions as the Proton donor in the catalytic mechanism. Residue 164–165 (GT) participates in (S)-2,3,4,5-tetrahydrodipicolinate binding.

It belongs to the DapB family.

It localises to the cytoplasm. It catalyses the reaction (S)-2,3,4,5-tetrahydrodipicolinate + NAD(+) + H2O = (2S,4S)-4-hydroxy-2,3,4,5-tetrahydrodipicolinate + NADH + H(+). The catalysed reaction is (S)-2,3,4,5-tetrahydrodipicolinate + NADP(+) + H2O = (2S,4S)-4-hydroxy-2,3,4,5-tetrahydrodipicolinate + NADPH + H(+). It functions in the pathway amino-acid biosynthesis; L-lysine biosynthesis via DAP pathway; (S)-tetrahydrodipicolinate from L-aspartate: step 4/4. Catalyzes the conversion of 4-hydroxy-tetrahydrodipicolinate (HTPA) to tetrahydrodipicolinate. The sequence is that of 4-hydroxy-tetrahydrodipicolinate reductase from Geobacillus kaustophilus (strain HTA426).